The chain runs to 317 residues: Adenine deaminase (317 aa).

The Zn(2+) site is built by His-14, His-16, and His-194. Glu-197 functions as the Proton donor in the catalytic mechanism. Zn(2+) is bound at residue Asp-275. Residue Asp-276 participates in substrate binding.

Belongs to the metallo-dependent hydrolases superfamily. Adenosine and AMP deaminases family. Adenine deaminase type 2 subfamily. Zn(2+) is required as a cofactor.

The enzyme catalyses adenine + H2O + H(+) = hypoxanthine + NH4(+). Catalyzes the hydrolytic deamination of adenine to hypoxanthine. Plays an important role in the purine salvage pathway and in nitrogen catabolism. The polypeptide is Adenine deaminase (Bordetella bronchiseptica (strain ATCC BAA-588 / NCTC 13252 / RB50) (Alcaligenes bronchisepticus)).